The sequence spans 150 residues: Ribonuclease H (150 aa).

One can recognise an RNase H type-1 domain in the interval 1-141 (MKFIEVHTDG…VDVLARNQAI (141 aa)). Mg(2+) is bound by residues Asp-9, Glu-47, Asp-69, and Asp-133.

The protein belongs to the RNase H family. As to quaternary structure, monomer. The cofactor is Mg(2+).

The protein resides in the cytoplasm. It catalyses the reaction Endonucleolytic cleavage to 5'-phosphomonoester.. Its function is as follows. Endonuclease that specifically degrades the RNA of RNA-DNA hybrids. This Xanthomonas euvesicatoria pv. vesicatoria (strain 85-10) (Xanthomonas campestris pv. vesicatoria) protein is Ribonuclease H.